A 113-amino-acid chain; its full sequence is DNA-directed RNA polymerase subunit Rpo4 (113 aa).

The protein belongs to the eukaryotic RPB4 RNA polymerase subunit family. Part of the 13-subunit RNA polymerase complex. Forms a stalk with Rpo7 that extends from the main structure.

The protein localises to the cytoplasm. It carries out the reaction RNA(n) + a ribonucleoside 5'-triphosphate = RNA(n+1) + diphosphate. Its function is as follows. DNA-dependent RNA polymerase (RNAP) catalyzes the transcription of DNA into RNA using the four ribonucleoside triphosphates as substrates. This subunit is less well bound than the others. This Saccharolobus solfataricus (strain ATCC 35092 / DSM 1617 / JCM 11322 / P2) (Sulfolobus solfataricus) protein is DNA-directed RNA polymerase subunit Rpo4.